The sequence spans 1027 residues: MSLPEYAELHCLSNFSFLRGASHPEELAARALAQGYAALALTDECSLAGVVRAHLAAKKHGLKFIVGSEMMTVDGLKLVFLACNRHGYGNLSALITLARRRAEKGGYTLHRNDLESISPSGALPDCLVLWVPGNNPSSADGEWLVSRFPGRSWIAVELHAGPEDAERLAGLQSLGEVCGLPLVATGDVHMHIKARRPVQDVLTALRLKSTVFEAGYALFPNGERHLRSRLRLSRLYPPELLAETLNIAARCEFLLDELRYEYPEEIIPSGETPASWLRSETERGLQRRYPAGVPGSVRERIEHELGLIAEMAYEAYFLTVYDIVCYARSQDILCQGRGSAANSAVCYALGVTEVDPARSALLFERFVSKERGEPPDIDVDFEHERREDVIQYIYTKYGRERAALAAALITYRTKGALRDAGRALGFGIAQINALTASLAWWDKREQLPERFAELGLDPHAPRVEKWLAIAEALRGFPRHLTQHVGGFVISRGPLSRLVPVENAAMSARSVIQWDKDDLDAMGLMKVDILALGMLSAIRRMLQIVGETTGRPMKMQDIPAEDPATYEMLCHADSMGVFQVESRAQMAMLPRLRPQNFYDLVVEVALVRPGPIQGDMVHPYLKRRQGRERIEEISPAVDAVLERTYGVPIFQEQVMQLAVVAANFTPGEADQLRRAMAAWKRKGGLEPFEQKLLAGMAANDLPESFARRIIAQIQGFGEYGFPESHAASFALLVYASAWLKRHHPAAFLCGLLNSQPMGFYSPSMLIQDARRHGVRVLPPDVMTSDWDSRLDERGAVRLGLREISGFSVAAAKRITAVCRENQPFLNVADLAARAGLQRRDLDLLAAGDALQGLAGHRRQAAWAATVAVVQGDLFDGTPVVEAEIELPAPSDGENLVADYRSLGLTLRSHPLSLLRQYLAERRFVTAADLKMAGHHTLIRSVGIVVGRQRPGTATGIVFVTLEDETGLSNVVVHPQLVEKQRRELLGSTLLGVYGQLQVEGEVVHLVAKRLVDLSAWLGRLETVSRDFH.

Belongs to the DNA polymerase type-C family. DnaE2 subfamily.

It localises to the cytoplasm. The catalysed reaction is DNA(n) + a 2'-deoxyribonucleoside 5'-triphosphate = DNA(n+1) + diphosphate. DNA polymerase involved in damage-induced mutagenesis and translesion synthesis (TLS). It is not the major replicative DNA polymerase. This Dechloromonas aromatica (strain RCB) protein is Error-prone DNA polymerase.